The following is a 90-amino-acid chain: Putative ATPase inhibitor, mitochondrial (90 aa).

Residues 42–89 adopt a coiled-coil conformation; that stretch reads ESREKAKEDFFVHQHEIEQLRKLKESLKLHREELDELESRVDKKMKSN.

It belongs to the ATPase inhibitor family.

It localises to the mitochondrion. In terms of biological role, forms a one-to-one complex with ATPase to inhibit the enzyme activity completely. In Schizosaccharomyces pombe (strain 972 / ATCC 24843) (Fission yeast), this protein is Putative ATPase inhibitor, mitochondrial (inh1).